The chain runs to 141 residues: Hemoglobin subunit alpha (141 aa).

Positions 1–141 (VLSPEDKNHV…VSTVLTSKYR (141 aa)) constitute a Globin domain. Ser3 is modified (phosphoserine). Lys7 is modified (N6-succinyllysine). Lys16 is modified (N6-acetyllysine; alternate). Lys16 carries the N6-succinyllysine; alternate modification. Tyr24 is subject to Phosphotyrosine. Position 35 is a phosphoserine (Ser35). Lys40 carries the post-translational modification N6-succinyllysine. Ser49 carries the post-translational modification Phosphoserine. His58 provides a ligand contact to O2. His87 contacts heme b. Ser102 bears the Phosphoserine mark. Thr108 carries the post-translational modification Phosphothreonine. Residues Ser124 and Ser131 each carry the phosphoserine modification. A phosphothreonine mark is found at Thr134 and Thr137. Ser138 is subject to Phosphoserine.

The protein belongs to the globin family. In terms of assembly, heterotetramer of two alpha chains and two beta chains. As to expression, red blood cells.

Its function is as follows. Involved in oxygen transport from the lung to the various peripheral tissues. Hemopressin acts as an antagonist peptide of the cannabinoid receptor CNR1. Hemopressin-binding efficiently blocks cannabinoid receptor CNR1 and subsequent signaling. The protein is Hemoglobin subunit alpha (HBA) of Spalax ehrenbergi (Middle East blind mole rat).